A 216-amino-acid chain; its full sequence is Dephospho-CoA kinase (216 aa).

One can recognise a DPCK domain in the interval 18 to 216; sequence IIGVIGPPCS…SELASVLQSK (199 aa). 26–31 serves as a coordination point for ATP; sequence CSGKST.

This sequence belongs to the CoaE family.

The protein localises to the cytoplasm. It carries out the reaction 3'-dephospho-CoA + ATP = ADP + CoA + H(+). It functions in the pathway cofactor biosynthesis; coenzyme A biosynthesis; CoA from (R)-pantothenate: step 5/5. Catalyzes the phosphorylation of the 3'-hydroxyl group of dephosphocoenzyme A to form coenzyme A. This is Dephospho-CoA kinase from Rhodopirellula baltica (strain DSM 10527 / NCIMB 13988 / SH1).